Here is a 509-residue protein sequence, read N- to C-terminus: MFS transporter fsdG (509 aa).

Asn8 and Asn26 each carry an N-linked (GlcNAc...) asparagine glycan. 4 helical membrane passes run Phe63 to Met83, Ile103 to Pro123, Ile139 to Ala159, and Phe162 to Phe182. N-linked (GlcNAc...) asparagine glycosylation occurs at Asn189. 4 helical membrane-spanning segments follow: residues Leu195–Ala215, Trp222–Leu242, Leu298–Ile318, and Gly341–Ile361. Asn367 carries an N-linked (GlcNAc...) asparagine glycan. 4 consecutive transmembrane segments (helical) span residues Tyr380 to Trp400, Trp408 to Pro428, Ala442 to Leu462, and Gly474 to Phe494.

This sequence belongs to the major facilitator superfamily.

It localises to the cell membrane. Its function is as follows. Efflux pump that might be required for efficient secretion of fusaridione A or other secondary metabolies produced by the fusaridione A gene cluster. This Fusarium heterosporum protein is MFS transporter fsdG.